Reading from the N-terminus, the 636-residue chain is Chaperone protein DnaK (636 aa).

A Phosphothreonine; by autocatalysis modification is found at T198. Positions 600–636 are disordered; it reads IAQQQAQAQQGSAEAGAQSQEDDVVDAEFEEVKDDKK. The segment covering 601 to 618 has biased composition (low complexity); sequence AQQQAQAQQGSAEAGAQS. Acidic residues predominate over residues 619-636; the sequence is QEDDVVDAEFEEVKDDKK.

It belongs to the heat shock protein 70 family.

In terms of biological role, acts as a chaperone. In Vibrio vulnificus (strain CMCP6), this protein is Chaperone protein DnaK.